A 330-amino-acid chain; its full sequence is Aspartate--ammonia ligase (330 aa).

It belongs to the class-II aminoacyl-tRNA synthetase family. AsnA subfamily.

The protein resides in the cytoplasm. The catalysed reaction is L-aspartate + NH4(+) + ATP = L-asparagine + AMP + diphosphate + H(+). It participates in amino-acid biosynthesis; L-asparagine biosynthesis; L-asparagine from L-aspartate (ammonia route): step 1/1. The protein is Aspartate--ammonia ligase of Aeromonas salmonicida (strain A449).